A 473-amino-acid chain; its full sequence is Cell division protein FtsZ homolog 2-2, chloroplastic (473 aa).

Residues 124 to 128, 213 to 215, Glu-244, and Arg-248 each bind GTP; these read GGGSN and GTG. Thr-282 is modified (phosphothreonine; by PGK1). Position 292 (Asp-292) interacts with GTP. A disordered region spans residues 424–455; that stretch reads EEGEGRPLQATQADASMGATRRPSSSFTEGSS. Residues 445–454 show a composition bias toward polar residues; sequence RPSSSFTEGS.

The protein belongs to the FtsZ family. In terms of assembly, aggregates to form a contractile ring-like structure; contraction of the ring was accompanied by an increase in the filament turnover rate. Self-interacts and binds to FTSZ1 in heteropolymers to form two morphologically distinct types of filaments, termed type-I (smooth filaments) and -II (rough filaments), in a GTP-dependent manner. Part of a complex made of ARC3, ARC6, FTSZ1 and FTSZ2. Interacts (via C-terminus) with ARC6. Interacts with CDP1/PARC6. Binds to PGK1. In terms of processing, phosphorylation at Thr-282 is required for the formation of contractile ring at the chloroplast midpoint.

The protein localises to the plastid. It localises to the chloroplast stroma. It is found in the chloroplast thylakoid membrane. Its function is as follows. Exhibits GTPase activity. Component of the plastid division machinery that forms a contractile ring at the division site. Contributes to plastid division in the vegetative shoot apex, at the shoot apical meristem (SAM) where the proplastid-to-chloroplast transition takes place. This chain is Cell division protein FtsZ homolog 2-2, chloroplastic, found in Arabidopsis thaliana (Mouse-ear cress).